Consider the following 214-residue polypeptide: High frequency lysogenization protein HflD homolog (214 aa).

It belongs to the HflD family.

The protein localises to the cytoplasm. Its subcellular location is the cell inner membrane. The sequence is that of High frequency lysogenization protein HflD homolog from Chromohalobacter salexigens (strain ATCC BAA-138 / DSM 3043 / CIP 106854 / NCIMB 13768 / 1H11).